Reading from the N-terminus, the 86-residue chain is Small ribosomal subunit protein bS20 (86 aa).

Residues 1-22 form a disordered region; the sequence is MANIKSQIKRIRTNERRRLRNQ. Over residues 7–20 the composition is skewed to basic residues; it reads QIKRIRTNERRRLR.

The protein belongs to the bacterial ribosomal protein bS20 family.

Binds directly to 16S ribosomal RNA. The polypeptide is Small ribosomal subunit protein bS20 (Mycolicibacterium smegmatis (strain ATCC 700084 / mc(2)155) (Mycobacterium smegmatis)).